A 547-amino-acid polypeptide reads, in one-letter code: bZIP transcription factor 29 (547 aa).

Disordered regions lie at residues 1–199, 244–312, and 333–356; these read MGDT…SGGE, NSSE…DIAP, and GDES…TNSV. Residues 15–52 are compositionally biased toward polar residues; it reads LHSSFGTTSSSIPKNPISQLDLNPNFIRSSAPQFSKPF. Pro residues predominate over residues 63–73; it reads PSHPNLIPPTS. Polar residues predominate over residues 74 to 89; that stretch reads PFSQIPTTRQPGSHNF. Basic and acidic residues predominate over residues 120 to 132; the sequence is FRDHDVSMEDRDS. Residues 134-157 show a composition bias toward polar residues; it reads VFNSNHSLPPSPFTRCNSTSSSSL. Residues 249–263 show a composition bias toward basic and acidic residues; it reads DDSKNGNENRDDMES. Residues 264–275 are compositionally biased toward polar residues; sequence SRASGTKTNGSD. Residues 279-294 show a composition bias toward low complexity; that stretch reads ESSSVNESANNNMNSS. The span at 344–356 shows a compositional bias: polar residues; the sequence is GSMSRKVSPTNSV. One can recognise a bZIP domain in the interval 394-457; the sequence is DPKRVKRILA…MGLTNQNNEL (64 aa). Residues 396-417 are basic motif; that stretch reads KRVKRILANRQSAARSKERKMR. A coiled-coil region spans residues 416–469; sequence MRYIVELEHKVQTLQTEATTLSAQLTLLQRDMMGLTNQNNELKFRLQAMEQQAR. Residues 422–457 form a leucine-zipper region; that stretch reads LEHKVQTLQTEATTLSAQLTLLQRDMMGLTNQNNEL. The segment covering 517–535 has biased composition (low complexity); that stretch reads QLRQQPQQMQQQSHQQNHQ. The segment at 517 to 547 is disordered; it reads QLRQQPQQMQQQSHQQNHQNGTMATKSESNE. The segment covering 536 to 547 has biased composition (polar residues); the sequence is NGTMATKSESNE.

Forms homodimers. As to expression, expressed in roots, leaves and flowers. Expressed in the root tips, lateral root primordia, and guard cells of leaves, hypocotyls and anthers.

It localises to the cytoplasm. The protein localises to the nucleus. Functionally, transcription factor that acts as a repressor of reproductive development, meristem size and plant growth. Regulates meristem size, cell size and cell number during plant development. Binds to the promoters of the cell cycle regulators CYCB1-2 and SMR4, and genes involved in cell wall organization, such as XTH9, EXPA1 and EXPA3. Possesses transactivation activity in yeast. Possesses transactivation activity in plant protoplasts. Plays a role in abiotic stress response by binding to the 5'-CAGCTG-3' DNA sequence found in the promoters of MYB44 and TRX8. Plays a role in osmosensory response by binding to the 5'-AGCTGT/G-3' DNA sequence found in the promoters of the hypoosmolarity-responsive genes CYP707A1 and CYP707A3. Binds to the 5'-AGCTGT-3' DNA sequence found in the promoter of the ZAT1 gene in response to abiotic stresses, such as oxidative stress, high-light, osmotic shock, salt and heat stresses. The protein is bZIP transcription factor 29 of Arabidopsis thaliana (Mouse-ear cress).